A 663-amino-acid polypeptide reads, in one-letter code: Beta-galactosidase YesZ (663 aa).

R106 contacts substrate. C110 lines the Zn(2+) pocket. Residue N144 participates in substrate binding. Catalysis depends on E145, which acts as the Proton donor. Residues C153, C155, and C158 each coordinate Zn(2+). E296 functions as the Nucleophile in the catalytic mechanism. 345–348 (EISH) serves as a coordination point for substrate.

Belongs to the glycosyl hydrolase 42 family. In terms of assembly, homotrimer.

It carries out the reaction Hydrolysis of terminal non-reducing beta-D-galactose residues in beta-D-galactosides.. Functionally, may play a role in the degradation of rhamnogalacturonan derived from plant cell walls. The protein is Beta-galactosidase YesZ (yesZ) of Bacillus subtilis (strain 168).